Consider the following 474-residue polypeptide: Glutamate--tRNA ligase (474 aa).

The 'HIGH' region motif lies at 9-19 (PSPTGYLHVGG). A 'KMSKS' region motif is present at residues 240-244 (KLSKR). Lysine 243 lines the ATP pocket.

Belongs to the class-I aminoacyl-tRNA synthetase family. Glutamate--tRNA ligase type 1 subfamily. Monomer.

The protein localises to the cytoplasm. The enzyme catalyses tRNA(Glu) + L-glutamate + ATP = L-glutamyl-tRNA(Glu) + AMP + diphosphate. Catalyzes the attachment of glutamate to tRNA(Glu) in a two-step reaction: glutamate is first activated by ATP to form Glu-AMP and then transferred to the acceptor end of tRNA(Glu). The protein is Glutamate--tRNA ligase of Vibrio vulnificus (strain CMCP6).